We begin with the raw amino-acid sequence, 580 residues long: MFAGLQDLGVANGEDLKETLTNCTEPLKAIEQFQTENGVLLPSLQSALPFLDLHGTPRLEFHQSVFDELRDKLLERVSAIASEGKAEERYKKLEDLLEKSFSLVKMPSLQPVVMCVMKHLPKVPEKKLKLVMADKELYRACAVEVKRQIWQDNQALFGDEVSPLLKQYILEKESALFSTELSVLHNFFSPSPKTRRQGEVVQKLTQMVGKNVKLYDMVLQFLRTLFLRTRNVHYCTLRAELLMSLHDLDVSDICTVDPCHKFTWCLDACIRERFVDSKRARELQGFLDGVKKGQEQVLGDLSMILCDPFAINTLSLSTIRHLQELVSQETLPRDSPDLLLLLRLLALGQGAWDLIDSQVFKEPKMEAELITKFLPMLMSLVVDDFTFNVDQKLPAEEKASVTYPNTLPESFTKFLQEQRMACEVGLYYVLHITKQRNKNALLRLLPGLVETFGDLAFSDIFLHLLTGSLVLLADEFALEDFCSSLFDGFFLTASPRKENVHRHVLRLLLHLHARVAPSKLEALQKALEPTGQSGEAVKELYSQLGEKLEQLDHRKPSPTQAAETPALDLPLPSVPAPATL.

Position 519 is an N6-acetyllysine (K519). The tract at residues 552–580 is disordered; the sequence is DHRKPSPTQAAETPALDLPLPSVPAPATL. S557 bears the Phosphoserine mark.

This sequence belongs to the NELF-B family. In terms of assembly, the NELF complex is composed of NELFA, NELFB, NELFCD and NELFE; the N-terminus of NELFB binds to the NELFA:NELFCD subcomplex. Binds RNA which may help to stabilize the NELF complex on nucleic acid Interacts with the first BRCT repeat of BRCA1. Interacts with KIAA1191. Isoform 1 and isoform 2 interact with NELFA, NELFCD and NELFE. As to expression, isoform 1 is expressed in the kidney, liver, adipose and lung. Isoform 2 is widely expressed.

The protein resides in the nucleus. Essential component of the NELF complex, a complex that negatively regulates the elongation of transcription by RNA polymerase II (Pol II). The NELF complex, which acts via an association with the DSIF complex and causes transcriptional pausing, is counteracted by the P-TEFb kinase complex. May be able to induce chromatin unfolding. Essential for early embryogenesis; plays an important role in maintaining the undifferentiated state of embryonic stem cells (ESCs) by preventing unscheduled expression of developmental genes. Plays a key role in establishing the responsiveness of stem cells to developmental cues; facilitates plasticity and cell fate commitment in ESCs by establishing the appropriate expression level of signaling molecules. Supports the transcription of genes involved in energy metabolism in cardiomyocytes; facilitates the association of transcription initiation factors with the promoters of the metabolism-related genes. In Mus musculus (Mouse), this protein is Negative elongation factor B (Nelfb).